The chain runs to 333 residues: tRNA U34 carboxymethyltransferase (333 aa).

Carboxy-S-adenosyl-L-methionine-binding positions include Lys97, Trp111, Lys116, Gly136, 158–160 (DPS), 189–190 (IE), Met205, Tyr209, and Arg324.

Belongs to the class I-like SAM-binding methyltransferase superfamily. CmoB family. Homotetramer.

The enzyme catalyses carboxy-S-adenosyl-L-methionine + 5-hydroxyuridine(34) in tRNA = 5-carboxymethoxyuridine(34) in tRNA + S-adenosyl-L-homocysteine + H(+). In terms of biological role, catalyzes carboxymethyl transfer from carboxy-S-adenosyl-L-methionine (Cx-SAM) to 5-hydroxyuridine (ho5U) to form 5-carboxymethoxyuridine (cmo5U) at position 34 in tRNAs. The sequence is that of tRNA U34 carboxymethyltransferase from Chromohalobacter salexigens (strain ATCC BAA-138 / DSM 3043 / CIP 106854 / NCIMB 13768 / 1H11).